The primary structure comprises 510 residues: uncharacterized protein (510 aa).

Over 1-89 the chain is Lumenal; that stretch reads MTSSLDDIEP…QGQRKKVLLK (89 aa). The interval 38-76 is disordered; sequence AVSQGVPDMDGQTTDSSKDPEPNSEDKKAFPPSSGSFFS. The span at 53–66 shows a compositional bias: basic and acidic residues; the sequence is SSKDPEPNSEDKKA. Residues 67 to 76 are compositionally biased toward low complexity; it reads FPPSSGSFFS. Residues 90–110 form a helical membrane-spanning segment; that stretch reads FVFTNCLLAIICFTMFVLFWG. Over 111 to 123 the chain is Cytoplasmic; that stretch reads ALYDTSKYLHKVK. A helical membrane pass occupies residues 124–144; that stretch reads LLVVIQEPPVVILDNNSSMVV. Over 145–312 the chain is Lumenal; it reads PSISYALPTF…TDRILLAPTQ (168 aa). A helical membrane pass occupies residues 313-333; that stretch reads IGVVYCLLLTFFQFLLYGPLH. The Cytoplasmic portion of the chain corresponds to 334–349; sequence VEMAKVLRPANGLIYR. The helical transmembrane segment at 350–370 threads the bilayer; sequence IAMSWFTFFFASLFFCTTTAI. Topologically, residues 371-381 are lumenal; it reads FQVDFTKSFGR. The chain crosses the membrane as a helical span at residues 382–402; sequence GGFVVYWMSTWLFMLAAGGAN. Topologically, residues 403–416 are cytoplasmic; the sequence is ENAVMLVITLGPQY. Residues 417 to 437 form a helical membrane-spanning segment; that stretch reads LGFWILSFVILNIAPSFFPLA. Residues 438 to 474 lie on the Lumenal side of the membrane; that stretch reads LNNNVYRYGYMMPVHNVIDIYRVIFFDVTRRKMGRNY. Residues 475 to 495 traverse the membrane as a helical segment; the sequence is GILVALIALNTALLPFVGKYA. Residues 496-510 lie on the Cytoplasmic side of the membrane; that stretch reads SRKLKQKALVAAKQS.

This sequence to yeast SNG1.

The protein localises to the endoplasmic reticulum membrane. This is an uncharacterized protein from Saccharomyces cerevisiae (strain ATCC 204508 / S288c) (Baker's yeast).